Reading from the N-terminus, the 233-residue chain is Large ribosomal subunit protein uL1 (233 aa).

It belongs to the universal ribosomal protein uL1 family. Part of the 50S ribosomal subunit.

Functionally, binds directly to 23S rRNA. The L1 stalk is quite mobile in the ribosome, and is involved in E site tRNA release. Protein L1 is also a translational repressor protein, it controls the translation of the L11 operon by binding to its mRNA. The protein is Large ribosomal subunit protein uL1 of Nautilia profundicola (strain ATCC BAA-1463 / DSM 18972 / AmH).